Reading from the N-terminus, the 247-residue chain is Membrane-embedded CAAX protease MroQ (247 aa).

An N-terminal signal peptide occupies residues 1–17 (MTRLWASLLTVIIYILS). Transmembrane regions (helical) follow at residues 42–62 (VIYI…LINL), 81–101 (IIPW…VVSI), and 119–139 (LIII…IGPL). The active site involves Glu141. Helical transmembrane passes span 162 to 182 (IVAF…AHND) and 183 to 203 (FKFI…YVWT).

Belongs to the peptidase U48 family.

It is found in the membrane. Participates in the regulation of the Agr quorum sensing activity and plays thereby an important role in virulence. Mechanistically, elicits a protease dependent control of Agr activity without playing a role in the processing of the pheromone-precursor AgrD. The protein is Membrane-embedded CAAX protease MroQ (mroQ) of Staphylococcus aureus (strain USA300).